Here is a 309-residue protein sequence, read N- to C-terminus: Dihydroorotate dehydrogenase B (NAD(+)), catalytic subunit (309 aa).

Residues S21 and 45 to 46 (KA) contribute to the FMN site. Substrate-binding positions include K45 and 69–73 (NAIGL). FMN is bound by residues N99 and N127. Residue N127 coordinates substrate. C130 serves as the catalytic Nucleophile. K165 and I191 together coordinate FMN. Substrate is bound at residue 192–193 (NT). Residues G217, 243–244 (GG), and 265–266 (GT) contribute to the FMN site.

The protein belongs to the dihydroorotate dehydrogenase family. Type 1 subfamily. Heterotetramer of 2 PyrK and 2 PyrD type B subunits. The cofactor is FMN.

It localises to the cytoplasm. The catalysed reaction is (S)-dihydroorotate + NAD(+) = orotate + NADH + H(+). It functions in the pathway pyrimidine metabolism; UMP biosynthesis via de novo pathway; orotate from (S)-dihydroorotate (NAD(+) route): step 1/1. Its function is as follows. Catalyzes the conversion of dihydroorotate to orotate with NAD(+) as electron acceptor. The sequence is that of Dihydroorotate dehydrogenase B (NAD(+)), catalytic subunit (pyrD) from Bacillus cytotoxicus (strain DSM 22905 / CIP 110041 / 391-98 / NVH 391-98).